A 517-amino-acid chain; its full sequence is Ribose import ATP-binding protein RbsA 1 (517 aa).

ABC transporter domains lie at 11 to 251 and 263 to 507; these read LEMR…VGRD and YDPG…ALAT. 43–50 contacts ATP; the sequence is GENGAGKS.

It belongs to the ABC transporter superfamily. Ribose importer (TC 3.A.1.2.1) family. In terms of assembly, the complex is composed of an ATP-binding protein (RbsA), two transmembrane proteins (RbsC) and a solute-binding protein (RbsB).

The protein localises to the cell inner membrane. It carries out the reaction D-ribose(out) + ATP + H2O = D-ribose(in) + ADP + phosphate + H(+). Functionally, part of the ABC transporter complex RbsABC involved in ribose import. Responsible for energy coupling to the transport system. This chain is Ribose import ATP-binding protein RbsA 1, found in Burkholderia ambifaria (strain ATCC BAA-244 / DSM 16087 / CCUG 44356 / LMG 19182 / AMMD) (Burkholderia cepacia (strain AMMD)).